Here is a 71-residue protein sequence, read N- to C-terminus: Exodeoxyribonuclease 7 small subunit (71 aa).

Belongs to the XseB family. As to quaternary structure, heterooligomer composed of large and small subunits.

The protein resides in the cytoplasm. The enzyme catalyses Exonucleolytic cleavage in either 5'- to 3'- or 3'- to 5'-direction to yield nucleoside 5'-phosphates.. In terms of biological role, bidirectionally degrades single-stranded DNA into large acid-insoluble oligonucleotides, which are then degraded further into small acid-soluble oligonucleotides. The protein is Exodeoxyribonuclease 7 small subunit of Streptococcus uberis (strain ATCC BAA-854 / 0140J).